The chain runs to 361 residues: Ribosomal RNA large subunit methyltransferase M (361 aa).

S-adenosyl-L-methionine contacts are provided by residues S187, 220–223, D239, D259, and D276; that span reads CPGG. K305 functions as the Proton acceptor in the catalytic mechanism.

This sequence belongs to the class I-like SAM-binding methyltransferase superfamily. RNA methyltransferase RlmE family. RlmM subfamily. In terms of assembly, monomer.

The protein localises to the cytoplasm. The catalysed reaction is cytidine(2498) in 23S rRNA + S-adenosyl-L-methionine = 2'-O-methylcytidine(2498) in 23S rRNA + S-adenosyl-L-homocysteine + H(+). In terms of biological role, catalyzes the 2'-O-methylation at nucleotide C2498 in 23S rRNA. In Shewanella sp. (strain MR-7), this protein is Ribosomal RNA large subunit methyltransferase M.